The sequence spans 498 residues: Probable malate:quinone oxidoreductase (498 aa).

The protein belongs to the MQO family. The cofactor is FAD.

It catalyses the reaction (S)-malate + a quinone = a quinol + oxaloacetate. The protein operates within carbohydrate metabolism; tricarboxylic acid cycle; oxaloacetate from (S)-malate (quinone route): step 1/1. In Granulibacter bethesdensis (strain ATCC BAA-1260 / CGDNIH1), this protein is Probable malate:quinone oxidoreductase.